The following is a 129-amino-acid chain: Follitropin subunit beta (129 aa).

A signal peptide spans 1–19 (MKSVQFCFLFCCWRAICCR). 6 disulfide bridges follow: cysteine 21–cysteine 69, cysteine 35–cysteine 84, cysteine 38–cysteine 122, cysteine 46–cysteine 100, cysteine 50–cysteine 102, and cysteine 105–cysteine 112. Asparagine 25 and asparagine 42 each carry an N-linked (GlcNAc...) asparagine glycan.

It belongs to the glycoprotein hormones subunit beta family. In terms of assembly, heterodimer. The active follitropin is a heterodimer composed of an alpha chain/CGA shared with other hormones and a unique beta chain/FSHB shown here.

Its subcellular location is the secreted. Functionally, together with the alpha chain CGA constitutes follitropin, the follicle-stimulating hormone, and provides its biological specificity to the hormone heterodimer. Binds FSHR, a G protein-coupled receptor, on target cells to activate downstream signaling pathways. Follitropin is involved in follicle development and spermatogenesis in reproductive organs. This chain is Follitropin subunit beta (FSHB), found in Ovis aries (Sheep).